Here is a 330-residue protein sequence, read N- to C-terminus: Lipoyl synthase (330 aa).

7 residues coordinate [4Fe-4S] cluster: cysteine 55, cysteine 60, cysteine 66, cysteine 81, cysteine 85, cysteine 88, and serine 292. The 215-residue stretch at 67-281 (WEDREATFLI…AEEAREIGFV (215 aa)) folds into the Radical SAM core domain.

Belongs to the radical SAM superfamily. Lipoyl synthase family. It depends on [4Fe-4S] cluster as a cofactor.

The protein localises to the cytoplasm. The catalysed reaction is [[Fe-S] cluster scaffold protein carrying a second [4Fe-4S](2+) cluster] + N(6)-octanoyl-L-lysyl-[protein] + 2 oxidized [2Fe-2S]-[ferredoxin] + 2 S-adenosyl-L-methionine + 4 H(+) = [[Fe-S] cluster scaffold protein] + N(6)-[(R)-dihydrolipoyl]-L-lysyl-[protein] + 4 Fe(3+) + 2 hydrogen sulfide + 2 5'-deoxyadenosine + 2 L-methionine + 2 reduced [2Fe-2S]-[ferredoxin]. It functions in the pathway protein modification; protein lipoylation via endogenous pathway; protein N(6)-(lipoyl)lysine from octanoyl-[acyl-carrier-protein]: step 2/2. Its function is as follows. Catalyzes the radical-mediated insertion of two sulfur atoms into the C-6 and C-8 positions of the octanoyl moiety bound to the lipoyl domains of lipoate-dependent enzymes, thereby converting the octanoylated domains into lipoylated derivatives. In Cutibacterium acnes (strain DSM 16379 / KPA171202) (Propionibacterium acnes), this protein is Lipoyl synthase.